A 503-amino-acid chain; its full sequence is Probable cytosol aminopeptidase (503 aa).

Mn(2+) contacts are provided by Lys-274 and Asp-279. Residue Lys-286 is part of the active site. Asp-297, Asp-356, and Glu-358 together coordinate Mn(2+). Arg-360 is a catalytic residue.

This sequence belongs to the peptidase M17 family. Mn(2+) serves as cofactor.

It is found in the cytoplasm. The enzyme catalyses Release of an N-terminal amino acid, Xaa-|-Yaa-, in which Xaa is preferably Leu, but may be other amino acids including Pro although not Arg or Lys, and Yaa may be Pro. Amino acid amides and methyl esters are also readily hydrolyzed, but rates on arylamides are exceedingly low.. It carries out the reaction Release of an N-terminal amino acid, preferentially leucine, but not glutamic or aspartic acids.. In terms of biological role, presumably involved in the processing and regular turnover of intracellular proteins. Catalyzes the removal of unsubstituted N-terminal amino acids from various peptides. The polypeptide is Probable cytosol aminopeptidase (Burkholderia multivorans (strain ATCC 17616 / 249)).